The chain runs to 138 residues: Ribulose bisphosphate carboxylase small subunit (138 aa).

It belongs to the RuBisCO small chain family. As to quaternary structure, heterohexadecamer of 8 large and 8 small subunits.

It localises to the plastid. It is found in the chloroplast. RuBisCO catalyzes two reactions: the carboxylation of D-ribulose 1,5-bisphosphate, the primary event in carbon dioxide fixation, as well as the oxidative fragmentation of the pentose substrate in the photorespiration process. Both reactions occur simultaneously and in competition at the same active site. Although the small subunit is not catalytic it is essential for maximal activity. This is Ribulose bisphosphate carboxylase small subunit from Pyropia suborbiculata (Red alga).